Consider the following 225-residue polypeptide: Octanoyltransferase (225 aa).

The BPL/LPL catalytic domain occupies 29–210; it reads PDTDDEIWVV…RLIAHLDGAT (182 aa). Substrate contacts are provided by residues 69–76, 141–143, and 154–156; these read RGGQITYH, ALG, and GLS. Cys172 (acyl-thioester intermediate) is an active-site residue.

The protein belongs to the LipB family.

It localises to the cytoplasm. It carries out the reaction octanoyl-[ACP] + L-lysyl-[protein] = N(6)-octanoyl-L-lysyl-[protein] + holo-[ACP] + H(+). The protein operates within protein modification; protein lipoylation via endogenous pathway; protein N(6)-(lipoyl)lysine from octanoyl-[acyl-carrier-protein]: step 1/2. Catalyzes the transfer of endogenously produced octanoic acid from octanoyl-acyl-carrier-protein onto the lipoyl domains of lipoate-dependent enzymes. Lipoyl-ACP can also act as a substrate although octanoyl-ACP is likely to be the physiological substrate. This chain is Octanoyltransferase, found in Burkholderia pseudomallei (strain K96243).